Reading from the N-terminus, the 77-residue chain is Putative defensin-like protein 160 (77 aa).

The N-terminal stretch at 1 to 24 is a signal peptide; sequence MAKLSCSYFFILMLVFSALLMVEC. Cystine bridges form between C30/C77, C40/C59, C45/C71, and C49/C73.

The protein belongs to the DEFL family.

It localises to the secreted. This chain is Putative defensin-like protein 160 (LCR26), found in Arabidopsis thaliana (Mouse-ear cress).